The following is a 332-amino-acid chain: Ketol-acid reductoisomerase (NADP(+)) (332 aa).

The KARI N-terminal Rossmann domain occupies 1 to 182; the sequence is MAQTWKDTDI…GSARAGLIKT (182 aa). NADP(+) is bound by residues 25–28, K48, S53, and 83–86; these read YGIQ and DMIQ. H108 is a catalytic residue. Residue G134 participates in NADP(+) binding. The KARI C-terminal knotted domain maps to 183 to 329; that stretch reads AFKEEVETDW…KEMRKMMWPD (147 aa). Positions 191, 195, 227, and 231 each coordinate Mg(2+). S252 contacts substrate.

The protein belongs to the ketol-acid reductoisomerase family. Mg(2+) serves as cofactor.

The enzyme catalyses (2R)-2,3-dihydroxy-3-methylbutanoate + NADP(+) = (2S)-2-acetolactate + NADPH + H(+). It catalyses the reaction (2R,3R)-2,3-dihydroxy-3-methylpentanoate + NADP(+) = (S)-2-ethyl-2-hydroxy-3-oxobutanoate + NADPH + H(+). It participates in amino-acid biosynthesis; L-isoleucine biosynthesis; L-isoleucine from 2-oxobutanoate: step 2/4. It functions in the pathway amino-acid biosynthesis; L-valine biosynthesis; L-valine from pyruvate: step 2/4. Its function is as follows. Involved in the biosynthesis of branched-chain amino acids (BCAA). Catalyzes an alkyl-migration followed by a ketol-acid reduction of (S)-2-acetolactate (S2AL) to yield (R)-2,3-dihydroxy-isovalerate. In the isomerase reaction, S2AL is rearranged via a Mg-dependent methyl migration to produce 3-hydroxy-3-methyl-2-ketobutyrate (HMKB). In the reductase reaction, this 2-ketoacid undergoes a metal-dependent reduction by NADPH to yield (R)-2,3-dihydroxy-isovalerate. The chain is Ketol-acid reductoisomerase (NADP(+)) from Nitrosopumilus maritimus (strain SCM1).